The chain runs to 433 residues: Serine hydroxymethyltransferase (433 aa).

Residues L132 and 136–138 (GHL) contribute to the (6S)-5,6,7,8-tetrahydrofolate site. K241 is modified (N6-(pyridoxal phosphate)lysine).

This sequence belongs to the SHMT family. Homodimer. Requires pyridoxal 5'-phosphate as cofactor.

It localises to the cytoplasm. The enzyme catalyses (6R)-5,10-methylene-5,6,7,8-tetrahydrofolate + glycine + H2O = (6S)-5,6,7,8-tetrahydrofolate + L-serine. It functions in the pathway one-carbon metabolism; tetrahydrofolate interconversion. The protein operates within amino-acid biosynthesis; glycine biosynthesis; glycine from L-serine: step 1/1. Its function is as follows. Catalyzes the reversible interconversion of serine and glycine with tetrahydrofolate (THF) serving as the one-carbon carrier. This reaction serves as the major source of one-carbon groups required for the biosynthesis of purines, thymidylate, methionine, and other important biomolecules. Also exhibits THF-independent aldolase activity toward beta-hydroxyamino acids, producing glycine and aldehydes, via a retro-aldol mechanism. The chain is Serine hydroxymethyltransferase from Methylobacterium sp. (strain 4-46).